We begin with the raw amino-acid sequence, 352 residues long: Protein RecA (352 aa).

67 to 74 (GPESSGKT) lines the ATP pocket.

Belongs to the RecA family.

The protein localises to the cytoplasm. In terms of biological role, can catalyze the hydrolysis of ATP in the presence of single-stranded DNA, the ATP-dependent uptake of single-stranded DNA by duplex DNA, and the ATP-dependent hybridization of homologous single-stranded DNAs. It interacts with LexA causing its activation and leading to its autocatalytic cleavage. This is Protein RecA from Enterobacter sp. (strain 638).